We begin with the raw amino-acid sequence, 157 residues long: Probable succinate transporter subunit YjjB (157 aa).

4 helical membrane passes run 2–22, 55–75, 87–107, and 129–149; these read GIIS…IPAV, AGFN…SIGI, IFTV…TAMI, and FLKA…PGLW.

Belongs to the ThrE exporter (TC 2.A.79) family. In terms of assembly, the transporter is composed of YjjB and YjjP.

It is found in the cell inner membrane. Its function is as follows. Involved in succinate export with YjjP. Both proteins are required for export. The protein is Probable succinate transporter subunit YjjB of Klebsiella pneumoniae subsp. pneumoniae (strain ATCC 700721 / MGH 78578).